A 178-amino-acid chain; its full sequence is Large ribosomal subunit protein uL6 (178 aa).

This sequence belongs to the universal ribosomal protein uL6 family. Part of the 50S ribosomal subunit.

In terms of biological role, this protein binds to the 23S rRNA, and is important in its secondary structure. It is located near the subunit interface in the base of the L7/L12 stalk, and near the tRNA binding site of the peptidyltransferase center. The polypeptide is Large ribosomal subunit protein uL6 (Frankia casuarinae (strain DSM 45818 / CECT 9043 / HFP020203 / CcI3)).